Here is a 97-residue protein sequence, read N- to C-terminus: Acylphosphatase-2 (97 aa).

N-acetylalanine is present on Ala-2. An Acylphosphatase-like domain is found at 7–97 (SVDYEVFGTV…LEYSNFSIRY (91 aa)). Active-site residues include Arg-22 and Asn-40. Ser-91 carries the phosphoserine modification.

It belongs to the acylphosphatase family.

The catalysed reaction is an acyl phosphate + H2O = a carboxylate + phosphate + H(+). In terms of biological role, its physiological role is not yet clear. The polypeptide is Acylphosphatase-2 (Acyp2) (Rattus norvegicus (Rat)).